Reading from the N-terminus, the 155-residue chain is Putative pre-16S rRNA nuclease (155 aa).

Belongs to the YqgF nuclease family.

Its subcellular location is the cytoplasm. Its function is as follows. Could be a nuclease involved in processing of the 5'-end of pre-16S rRNA. The sequence is that of Putative pre-16S rRNA nuclease from Xanthomonas axonopodis pv. citri (strain 306).